We begin with the raw amino-acid sequence, 209 residues long: Large ribosomal subunit protein bL25 (209 aa).

The interval 185-209 (SKATTGEEEGAEAAGEGEEAEEKPE) is disordered. Residues 190–209 (GEEEGAEAAGEGEEAEEKPE) show a composition bias toward acidic residues.

The protein belongs to the bacterial ribosomal protein bL25 family. CTC subfamily. Part of the 50S ribosomal subunit; part of the 5S rRNA/L5/L18/L25 subcomplex. Contacts the 5S rRNA. Binds to the 5S rRNA independently of L5 and L18.

In terms of biological role, this is one of the proteins that binds to the 5S RNA in the ribosome where it forms part of the central protuberance. The polypeptide is Large ribosomal subunit protein bL25 (Syntrophomonas wolfei subsp. wolfei (strain DSM 2245B / Goettingen)).